The sequence spans 329 residues: Ketol-acid reductoisomerase (NADP(+)) (329 aa).

The KARI N-terminal Rossmann domain occupies Met-2–Thr-181. NADP(+) contacts are provided by residues Tyr-25 to Gln-28, Arg-48, Ser-52, and Asp-82 to Gln-85. His-107 is an active-site residue. Gly-133 serves as a coordination point for NADP(+). Residues Thr-182–Phe-327 enclose the KARI C-terminal knotted domain. 4 residues coordinate Mg(2+): Asp-190, Glu-194, Glu-226, and Glu-230. Residue Ser-251 participates in substrate binding.

Belongs to the ketol-acid reductoisomerase family. The cofactor is Mg(2+).

The enzyme catalyses (2R)-2,3-dihydroxy-3-methylbutanoate + NADP(+) = (2S)-2-acetolactate + NADPH + H(+). It catalyses the reaction (2R,3R)-2,3-dihydroxy-3-methylpentanoate + NADP(+) = (S)-2-ethyl-2-hydroxy-3-oxobutanoate + NADPH + H(+). It functions in the pathway amino-acid biosynthesis; L-isoleucine biosynthesis; L-isoleucine from 2-oxobutanoate: step 2/4. Its pathway is amino-acid biosynthesis; L-valine biosynthesis; L-valine from pyruvate: step 2/4. Its function is as follows. Involved in the biosynthesis of branched-chain amino acids (BCAA). Catalyzes an alkyl-migration followed by a ketol-acid reduction of (S)-2-acetolactate (S2AL) to yield (R)-2,3-dihydroxy-isovalerate. In the isomerase reaction, S2AL is rearranged via a Mg-dependent methyl migration to produce 3-hydroxy-3-methyl-2-ketobutyrate (HMKB). In the reductase reaction, this 2-ketoacid undergoes a metal-dependent reduction by NADPH to yield (R)-2,3-dihydroxy-isovalerate. The chain is Ketol-acid reductoisomerase (NADP(+)) from Methanoregula boonei (strain DSM 21154 / JCM 14090 / 6A8).